An 82-amino-acid chain; its full sequence is Small ribosomal subunit protein bS18 (82 aa).

The tract at residues 1-20 (MSETSSAPVRRPFHRRRKTC) is disordered.

The protein belongs to the bacterial ribosomal protein bS18 family. Part of the 30S ribosomal subunit. Forms a tight heterodimer with protein bS6.

In terms of biological role, binds as a heterodimer with protein bS6 to the central domain of the 16S rRNA, where it helps stabilize the platform of the 30S subunit. The polypeptide is Small ribosomal subunit protein bS18 (Rhizobium johnstonii (strain DSM 114642 / LMG 32736 / 3841) (Rhizobium leguminosarum bv. viciae)).